The following is a 232-amino-acid chain: Ubiquinone biosynthesis O-methyltransferase (232 aa).

S-adenosyl-L-methionine contacts are provided by Arg-36, Gly-55, Asp-76, and Leu-120.

It belongs to the methyltransferase superfamily. UbiG/COQ3 family.

The catalysed reaction is a 3-demethylubiquinol + S-adenosyl-L-methionine = a ubiquinol + S-adenosyl-L-homocysteine + H(+). It catalyses the reaction a 3-(all-trans-polyprenyl)benzene-1,2-diol + S-adenosyl-L-methionine = a 2-methoxy-6-(all-trans-polyprenyl)phenol + S-adenosyl-L-homocysteine + H(+). Its pathway is cofactor biosynthesis; ubiquinone biosynthesis. O-methyltransferase that catalyzes the 2 O-methylation steps in the ubiquinone biosynthetic pathway. This chain is Ubiquinone biosynthesis O-methyltransferase, found in Pseudomonas putida (strain GB-1).